Reading from the N-terminus, the 183-residue chain is Putative manganese efflux pump MntP (183 aa).

The next 6 helical transmembrane spans lie at 8–28, 39–59, 68–88, 108–128, 133–153, and 162–182; these read MIAL…VALG, IFYI…VGMA, FGSI…GQMI, LFFA…LGIF, MATI…GLLV, and GSYS…KLLF.

Belongs to the MntP (TC 9.B.29) family.

It is found in the cell membrane. Functionally, probably functions as a manganese efflux pump. The chain is Putative manganese efflux pump MntP from Geobacillus thermodenitrificans (strain NG80-2).